Consider the following 351-residue polypeptide: DNA polymerase IV (351 aa).

The UmuC domain maps to 4–185 (IIHVDMDCFF…LPLGKIPGVG (182 aa)). Mg(2+) is bound by residues Asp8 and Asp103. Glu104 is a catalytic residue.

It belongs to the DNA polymerase type-Y family. Monomer. Requires Mg(2+) as cofactor.

Its subcellular location is the cytoplasm. The catalysed reaction is DNA(n) + a 2'-deoxyribonucleoside 5'-triphosphate = DNA(n+1) + diphosphate. In terms of biological role, poorly processive, error-prone DNA polymerase involved in untargeted mutagenesis. Copies undamaged DNA at stalled replication forks, which arise in vivo from mismatched or misaligned primer ends. These misaligned primers can be extended by PolIV. Exhibits no 3'-5' exonuclease (proofreading) activity. May be involved in translesional synthesis, in conjunction with the beta clamp from PolIII. The polypeptide is DNA polymerase IV (Cronobacter sakazakii (strain ATCC BAA-894) (Enterobacter sakazakii)).